Reading from the N-terminus, the 249-residue chain is Aquaporin TIP4-1 (249 aa).

At Met1 the chain carries N-acetylmethionine. Topologically, residues 1-20 (MKKIELGHHSEAAKPDCIKA) are cytoplasmic. Residue Lys3 is modified to N6,N6-dimethyllysine. Residues 21–41 (LIVEFITTFLFVFAGVGSAMA) form a helical membrane-spanning segment. Residues 42–49 (TDSLVGNT) are Vacuolar-facing. The helical transmembrane segment at 50–70 (LVGLFAVAVAHAFVVAVMISA) threads the bilayer. The Cytoplasmic segment spans residues 71 to 105 (GHISGGHLNPAVTLGLLLGGHISVFRAFLYWIDQL). Residues 79–81 (NPA) carry the NPA 1 motif. The chain crosses the membrane as a helical span at residues 106–126 (LASSAACFLLSYLTGGMGTPV). Over 127 to 137 (HTLASGVSYTQ) the chain is Vacuolar. Residues 138 to 158 (GIIWEIILTFSLLFTVYATIV) form a helical membrane-spanning segment. Topologically, residues 159–166 (DPKKGSLD) are cytoplasmic. A helical membrane pass occupies residues 167 to 187 (GFGPLLTGFVVGANILAGGAF). Residues 188-212 (SGASMNPARSFGPALVSGNWTDHWV) are Vacuolar-facing. The short motif at 193 to 195 (NPA) is the NPA 2 element. A helical membrane pass occupies residues 213 to 233 (YWVGPLIGGGLAGFIYENVLI). Topologically, residues 234–249 (DRPHVPVADDEQPLLN) are cytoplasmic.

Belongs to the MIP/aquaporin (TC 1.A.8) family. TIP (TC 1.A.8.10) subfamily. Expressed in roots.

It localises to the vacuole membrane. Its function is as follows. Aquaporins facilitate the transport of water and small neutral solutes across cell membranes. Transports urea in yeast cells in a pH-independent manner. The protein is Aquaporin TIP4-1 (TIP4-1) of Arabidopsis thaliana (Mouse-ear cress).